The chain runs to 1422 residues: DNA-directed RNA polymerase subunit beta (1422 aa).

Positions 1392–1422 are disordered; it reads QAAREAAERDLGGGPLGAPRGAVASGEKSSA.

This sequence belongs to the RNA polymerase beta chain family. As to quaternary structure, the RNAP catalytic core consists of 2 alpha, 1 beta, 1 beta' and 1 omega subunit. When a sigma factor is associated with the core the holoenzyme is formed, which can initiate transcription.

It carries out the reaction RNA(n) + a ribonucleoside 5'-triphosphate = RNA(n+1) + diphosphate. DNA-dependent RNA polymerase catalyzes the transcription of DNA into RNA using the four ribonucleoside triphosphates as substrates. The chain is DNA-directed RNA polymerase subunit beta from Anaeromyxobacter dehalogenans (strain 2CP-1 / ATCC BAA-258).